The primary structure comprises 530 residues: NAD(+) kinase (530 aa).

3 disordered regions span residues 1–27 (MKENDMNNGVDKWVNEEDGRNDHHNNN), 57–99 (ISSE…KSSN), and 486–530 (SLEA…RFSV). Residues 13-25 (WVNEEDGRNDHHN) show a composition bias toward basic and acidic residues. Low complexity predominate over residues 59-75 (SESSSRRSSLLNKDSSL). A compositionally biased stretch (polar residues) spans 88–99 (INGTRGSSKSSN). Phosphoserine occurs at positions 499 and 503. The segment covering 499–508 (SDDESDDESV) has biased composition (acidic residues).

The protein belongs to the NAD kinase family. In terms of assembly, homohexamer.

The enzyme catalyses NAD(+) + ATP = ADP + NADP(+) + H(+). Specifically phosphorylates NAD in the presence of ATP, dATP, or CTP as phosphoryl donors. This is NAD(+) kinase (UTR1) from Saccharomyces cerevisiae (strain ATCC 204508 / S288c) (Baker's yeast).